The following is a 338-amino-acid chain: Sorting nexin-15 (338 aa).

A PX domain is found at 1–131; the sequence is MSRRAKKDDF…EFFRGGEVTR (131 aa). The a 1,2-diacyl-sn-glycero-3-phospho-(1D-myo-inositol-3-phosphate) site is built by arginine 52, serine 54, arginine 88, and arginine 97. Arginine 106 carries the omega-N-methylarginine modification. The disordered stretch occupies residues 134-155; it reads EVSRDLQILPPPLIPTPPSDEA. Residues 142–151 are compositionally biased toward pro residues; it reads LPPPLIPTPP. 2 positions are modified to phosphoserine: serine 202 and serine 228. The interval 240 to 270 is disordered; the sequence is VQSKRLDQEPWEPGGREEEEAEDGDPAPAYL. The MIT domain maps to 266–338; sequence APAYLGQATE…RAETLHAHLP (73 aa).

This sequence belongs to the sorting nexin family. As to quaternary structure, homodimer. Interacts with SNX1, SNX2 and SNX4.

Its subcellular location is the cytoplasm. It is found in the membrane. The protein localises to the cytoplasmic vesicle membrane. May be involved in several stages of intracellular trafficking. Overexpression of SNX15 disrupts the normal trafficking of proteins from the plasma membrane to recycling endosomes or the TGN. This chain is Sorting nexin-15 (Snx15), found in Rattus norvegicus (Rat).